A 102-amino-acid polypeptide reads, in one-letter code: Large ribosomal subunit protein uL24 (102 aa).

This sequence belongs to the universal ribosomal protein uL24 family. As to quaternary structure, part of the 50S ribosomal subunit.

Functionally, one of two assembly initiator proteins, it binds directly to the 5'-end of the 23S rRNA, where it nucleates assembly of the 50S subunit. One of the proteins that surrounds the polypeptide exit tunnel on the outside of the subunit. In Paraburkholderia phytofirmans (strain DSM 17436 / LMG 22146 / PsJN) (Burkholderia phytofirmans), this protein is Large ribosomal subunit protein uL24.